The primary structure comprises 379 residues: Chaperone protein DnaJ (379 aa).

In terms of domain architecture, J spans 5 to 70; that stretch reads DYYEVLGVSR…QKRAAYDQYG (66 aa). The CR-type zinc finger occupies 134-212; the sequence is GVTKEIRIPT…CHGHGRVEKS (79 aa). Zn(2+)-binding residues include Cys147, Cys150, Cys164, Cys167, Cys186, Cys189, Cys200, and Cys203. CXXCXGXG motif repeat units lie at residues 147-154, 164-171, 186-193, and 200-207; these read CDVCHGSG, CPTCHGAG, CPHCHGRG, and CNKCHGHG.

It belongs to the DnaJ family. In terms of assembly, homodimer. The cofactor is Zn(2+).

The protein resides in the cytoplasm. Participates actively in the response to hyperosmotic and heat shock by preventing the aggregation of stress-denatured proteins and by disaggregating proteins, also in an autonomous, DnaK-independent fashion. Unfolded proteins bind initially to DnaJ; upon interaction with the DnaJ-bound protein, DnaK hydrolyzes its bound ATP, resulting in the formation of a stable complex. GrpE releases ADP from DnaK; ATP binding to DnaK triggers the release of the substrate protein, thus completing the reaction cycle. Several rounds of ATP-dependent interactions between DnaJ, DnaK and GrpE are required for fully efficient folding. Also involved, together with DnaK and GrpE, in the DNA replication of plasmids through activation of initiation proteins. This chain is Chaperone protein DnaJ, found in Yersinia pseudotuberculosis serotype O:1b (strain IP 31758).